The chain runs to 235 residues: uncharacterized protein (235 aa).

The 234-residue stretch at 2–235 folds into the ABC transporter domain; the sequence is IKLKNVTKTY…EEKLRGFDDR (234 aa). 38–45 lines the ATP pocket; the sequence is GPSGSGKS.

Belongs to the ABC transporter superfamily.

This is an uncharacterized protein from Methanocaldococcus jannaschii (strain ATCC 43067 / DSM 2661 / JAL-1 / JCM 10045 / NBRC 100440) (Methanococcus jannaschii).